Consider the following 210-residue polypeptide: Protein-L-isoaspartate O-methyltransferase (210 aa).

Ser-52 is an active-site residue.

Belongs to the methyltransferase superfamily. L-isoaspartyl/D-aspartyl protein methyltransferase family.

The protein localises to the cytoplasm. The catalysed reaction is [protein]-L-isoaspartate + S-adenosyl-L-methionine = [protein]-L-isoaspartate alpha-methyl ester + S-adenosyl-L-homocysteine. Catalyzes the methyl esterification of L-isoaspartyl residues in peptides and proteins that result from spontaneous decomposition of normal L-aspartyl and L-asparaginyl residues. It plays a role in the repair and/or degradation of damaged proteins. This is Protein-L-isoaspartate O-methyltransferase from Protochlamydia amoebophila (strain UWE25).